The following is a 524-amino-acid chain: Anthranilate synthase component 1 (524 aa).

The span at 1–16 (MQTTANHSSRSTQTGT) shows a compositional bias: polar residues. Residues 1–25 (MQTTANHSSRSTQTGTRAHGAALAE) form a disordered region. Residues serine 74 and 298–300 (PYM) contribute to the L-tryptophan site. A chorismate-binding site is contributed by 339–340 (GT). Lysine 355 is covalently cross-linked (Isoglutamyl lysine isopeptide (Lys-Gln) (interchain with Q-Cter in protein Pup)). Glutamate 366 serves as a coordination point for Mg(2+). Chorismate is bound by residues tyrosine 454, arginine 474, 488 to 490 (GGG), and glycine 490. Glutamate 503 serves as a coordination point for Mg(2+).

The protein belongs to the anthranilate synthase component I family. Heterotetramer consisting of two non-identical subunits: a beta subunit (TrpG) and a large alpha subunit (TrpE). It depends on Mg(2+) as a cofactor.

The enzyme catalyses chorismate + L-glutamine = anthranilate + pyruvate + L-glutamate + H(+). It participates in amino-acid biosynthesis; L-tryptophan biosynthesis; L-tryptophan from chorismate: step 1/5. With respect to regulation, feedback inhibited by tryptophan. Its function is as follows. Part of a heterotetrameric complex that catalyzes the two-step biosynthesis of anthranilate, an intermediate in the biosynthesis of L-tryptophan. In the first step, the glutamine-binding beta subunit (TrpG) of anthranilate synthase (AS) provides the glutamine amidotransferase activity which generates ammonia as a substrate that, along with chorismate, is used in the second step, catalyzed by the large alpha subunit of AS (TrpE) to produce anthranilate. In the absence of TrpG, TrpE can synthesize anthranilate directly from chorismate and high concentrations of ammonia. This is Anthranilate synthase component 1 (trpE) from Mycolicibacterium smegmatis (strain ATCC 700084 / mc(2)155) (Mycobacterium smegmatis).